Here is a 384-residue protein sequence, read N- to C-terminus: FAD-dependent urate hydroxylase (384 aa).

FAD contacts are provided by residues G11, 30-31, S43, and V125; that span reads EA. Substrate is bound by residues N178, R204, and 216 to 218; that span reads YFF. FAD is bound by residues D285 and 295–299; that span reads GQGGC.

This sequence belongs to the FAD-dependent urate hydroxylase family. The cofactor is FAD.

It catalyses the reaction urate + NADH + O2 + H(+) = 5-hydroxyisourate + NAD(+) + H2O. It functions in the pathway purine metabolism; urate degradation. Its function is as follows. Catalyzes the hydroxylation of uric acid to 5-hydroxyisourate. This chain is FAD-dependent urate hydroxylase (hpxO), found in Klebsiella pneumoniae.